Consider the following 445-residue polypeptide: Histone acetyltransferase ESA1 (445 aa).

S17 bears the Phosphoserine mark. Positions 22 to 74 constitute a Tudor-knot domain; the sequence is IIKCQCWVQKNDEERLAEILSINTRKAPPKFYVHYVNYNKRLDEWITTDRINL. The segment at 88–114 is disordered; the sequence is EDNKKQKKKKATNTSETPQDSLQDGVD. The span at 99-109 shows a compositional bias: polar residues; it reads TNTSETPQDSL. The 272-residue stretch at 162–433 folds into the MYST-type HAT domain; the sequence is ARVRNLNRII…IDPNRLIWKP (272 aa). The C2HC MYST-type; degenerate zinc finger occupies 195–220; the sequence is IYIDDFTLQYFGSKKQYERYRKKCTL. The ESA1-RPD3 motif motif lies at 245-266; the sequence is RTWCRNLCLLSKLFLDHKTLYY. K262 bears the N6-acetyllysine; by autocatalysis mark. Acetyl-CoA is bound by residues 303–307 and 312–318; these read ACILT and QRMGYGK. Residue E338 is the Proton donor/acceptor of the active site. S342 lines the acetyl-CoA pocket.

The protein belongs to the MYST (SAS/MOZ) family. Component of the NuA4 histone acetyltransferase complex composed of at least ACT1, ARP4, EAF3, EAF5, EAF6, EAF7, EPL1, ESA1, SWC4, TRA1, VID21, YAF9 and YNG2. The complex interacts with histones H4 (HHF1 and HHF2), H3 (HHT1 and HHT2) and H2A (HTA1 and HTA2). In terms of processing, autoacetylation at Lys-262 is required for proper function.

The enzyme catalyses L-lysyl-[histone] + acetyl-CoA = N(6)-acetyl-L-lysyl-[histone] + CoA + H(+). It carries out the reaction L-lysyl-[protein] + acetyl-CoA = N(6)-acetyl-L-lysyl-[protein] + CoA + H(+). It catalyses the reaction 2-hydroxyisobutanoyl-CoA + L-lysyl-[protein] = N(6)-(2-hydroxyisobutanoyl)-L-lysyl-[protein] + CoA + H(+). The catalysed reaction is (2E)-butenoyl-CoA + L-lysyl-[protein] = N(6)-(2E)-butenoyl-L-lysyl-[protein] + CoA + H(+). Functionally, catalytic component of the NuA4 histone acetyltransferase (HAT), a multiprotein complex involved in epigenetic transcriptional activation of selected genes principally by acetylation of nucleosomal histones H4, H3, H2B, H2A and H2A variant H2A.Z. Acetylates histone H4 to form H4K5ac, H4K8ac, H4K12ac and H4K16ac, histone H3 to form H3K14ac, histone H2B to form H2BK16ac, histone H2A to form H2AK4ac and H2AK7ac, and histone variant H2A.Z to form H2A.ZK14ac. Acetylation of histones gives a specific tag for epigenetic transcription initiation and elongation. Acetylation of histone H4 is essential for DNA double-strand break repair through homologous recombination. Involved in cell cycle progression. Recruitment to promoters depends on H3K4me. Also acetylates non-histone proteins, such as ATG3 and PAH1. Regulates autophagy by acetylating ATG3, controlling interaction the interaction between ATG3 and ATG8 and ATG8 lipidation. Acts as a regulator of fatty-acid-induced triacylglycerol synthesis by catalyzing acetylation of PAH1, thereby promoting the synthesis of diacylglycerol. In addition to protein acetyltransferase, can use different acyl-CoA substrates, such as 2-hydroxyisobutanoyl-CoA (2-hydroxyisobutyryl-CoA) or (2E)-butenoyl-CoA (crotonyl-CoA), and is able to mediate protein 2-hydroxyisobutyrylation and crotonylation, respectively. Catalyzes histone crotonylation. The sequence is that of Histone acetyltransferase ESA1 from Saccharomyces cerevisiae (strain ATCC 204508 / S288c) (Baker's yeast).